The primary structure comprises 3179 residues: Guanylate cyclase beta (3179 aa).

Over 1 to 60 (MKTQTLSLMNINGKRKFLGTNNKIYRKVIINPTSEDDIQKFCRNYFRIYNFSLYNFIRRL) the chain is Cytoplasmic. A helical transmembrane segment spans residues 61–81 (ISFDAILVYSLFLTVYIFSEI). The Extracellular portion of the chain corresponds to 82–88 (NHGETKK). A helical transmembrane segment spans residues 89 to 109 (YLFIDTAISLFFNIILLIVIE). Residues 110–295 (SLFELKKLKD…FCIKMNNIVY (186 aa)) lie on the Cytoplasmic side of the membrane. A helical membrane pass occupies residues 296-316 (YLIFMYFVFVVLSIVIKTIFF). The Extracellular segment spans residues 317–328 (HKKNSFQNSRDS). Residues 329-349 (FLSMLEDFVGLYILVLPIMMY) form a helical membrane-spanning segment. The Cytoplasmic portion of the chain corresponds to 350-988 (SEKSLIYIIQ…GRLNRFSLCK (639 aa)). Residues 989–1009 (VFLWIIYLKITVVSFYFFHNF) form a helical membrane-spanning segment. The Extracellular segment spans residues 1010–1020 (DNYFSGSSASS). The helical transmembrane segment at 1021-1041 (ILYTQTTFALLHYFLIIAFSA) threads the bilayer. The Cytoplasmic portion of the chain corresponds to 1042–1069 (YEIDLPYKFVRRLPYIYQLSRRKYFLNN). A helical transmembrane segment spans residues 1070–1090 (NIILLTIIEAILISLTSYYIL). At 1091–1102 (RLNVFHLITHRE) the chain is on the extracellular side. The helical transmembrane segment at 1103–1123 (FTFHIFILNVFITTEKILLLS) threads the bilayer. At 1124 to 1127 (KTWH) the chain is on the cytoplasmic side. A helical transmembrane segment spans residues 1128-1148 (IYFFIMAVLIIGILLIYVNIF). The Extracellular portion of the chain corresponds to 1149-1168 (TLVDCIKNGKCEFSLFQMEN). Residues 1169–1189 (IYFWTSLFPILYINFIFDKLM) traverse the membrane as a helical segment. Topologically, residues 1190–1304 (KYIKNRIYPD…YEKGNKLKLR (115 aa)) are cytoplasmic. A helical membrane pass occupies residues 1305–1325 (IIVILLFLIYIIIFSSQTIID). The Extracellular segment spans residues 1326–1331 (INTKSN). A helical transmembrane segment spans residues 1332-1352 (IHYITMFYIIYFVLACVLLIY). The Cytoplasmic segment spans residues 1353-1360 (IRIRNKAT). Residues 1361–1381 (STFFFFLSRFLLICGFCIELY) traverse the membrane as a helical segment. Residues 1382–1401 (DNISNDILNVLITYSFTVSY) lie on the Extracellular side of the membrane. N-linked (GlcNAc...) asparagine glycosylation is present at asparagine 1383. The helical transmembrane segment at 1402–1422 (IFFMSFKILEALLVCISILLL) threads the bilayer. Residues 1423 to 1464 (TFGVYYEKNKNMIDICTHFCSNPYLSINNLDHMNISCLCKKQ) lie on the Cytoplasmic side of the membrane. Residues 1465-1485 (IVIFLISLLSFTLICLSMKYY) form a helical membrane-spanning segment. Topologically, residues 1486 to 1507 (EIFYLKKKFLFRYKQKVNLAKQ) are extracellular. The helical transmembrane segment at 1508-1528 (IEILHTMLPNFLVEYLLISDP) threads the bilayer. Over 1529-2739 (KNDGIMVGKN…IINIDLTKKL (1211 aa)) the chain is Cytoplasmic. The 153-residue stretch at 1548-1700 (SVIFCDIDDF…DTVNTASRMK (153 aa)) folds into the Guanylate cyclase 1 domain. 3 disordered regions span residues 2123 to 2153 (LHNYNPMKNKNKNKKNNKNVRRNEYPNYTSS), 2355 to 2379 (SINKQTERKPKKKNKKNIENKKDKK), and 2576 to 2656 (KDSD…HHHS). Residues 2131 to 2142 (NKNKNKKNNKNV) show a composition bias toward basic residues. Low complexity predominate over residues 2584 to 2607 (NNNKISKNRYNNNNNNNNSNYSNI). Residues 2614–2645 (HNNKKNHHHNNNKYHHHNNNKYHHHNNNKYHH) are compositionally biased toward basic residues. A helical membrane pass occupies residues 2740 to 2760 (IIIFIFTEIFLSLCNIIELSF). The Extracellular segment spans residues 2761 to 2770 (YEKKLRYNDS). A glycan (N-linked (GlcNAc...) asparagine) is linked at asparagine 2768. A helical membrane pass occupies residues 2771 to 2791 (IVIIWLIRSIYLFIITYIWII). Topologically, residues 2792–2809 (LKTKLKEYKNNSSKMMWT) are cytoplasmic. The chain crosses the membrane as a helical span at residues 2810–2830 (IFILNIFLCSWGIILIDLSCI). Topologically, residues 2831-2842 (HYSMLLGNKNER) are extracellular. Residues 2843–2863 (ALFFMKDASELIICIQLIFIK) traverse the membrane as a helical segment. The Cytoplasmic segment spans residues 2864 to 2870 (NMLFKHK). The chain crosses the membrane as a helical span at residues 2871–2891 (FFFFVFFYIFLIYSFSKLFSI). Topologically, residues 2892–2895 (HTCQ) are extracellular. Residues 2896–2916 (THICCSIILFISINILYFWYS) form a helical membrane-spanning segment. Topologically, residues 2917–3179 (EYLDRIQFLV…KLRQKKGLRS (263 aa)) are cytoplasmic. Residues 2968–3102 (AFLFADIVGF…LDVLIANKIE (135 aa)) enclose the Guanylate cyclase 2 domain. Mg(2+) contacts are provided by aspartate 2973, isoleucine 2974, and aspartate 3017.

The protein in the N-terminal section; belongs to the cation transport ATPase (P-type) (TC 3.A.3) family. Type IV subfamily. In the C-terminal section; belongs to the adenylyl cyclase class-4/guanylyl cyclase family. It depends on Mg(2+) as a cofactor. Mn(2+) is required as a cofactor.

Its subcellular location is the membrane. It catalyses the reaction GTP = 3',5'-cyclic GMP + diphosphate. With respect to regulation, basal guanylate activity of the recombinant guanylate cyclase domains 1 and 2 is not modulated by an increase in Ca(2+) levels or by the gametogenesis inducer xanthurenic acid. In terms of biological role, catalyzes the synthesis of the second messenger cGMP from GTP. Regulates cGMP production in gametocytes; however, is dispensable for the initiation of gametogenesis. Does not have adenylate cyclase activity. The protein is Guanylate cyclase beta of Plasmodium falciparum (isolate 3D7).